The primary structure comprises 263 residues: Sulfur carrier protein FdhD (263 aa).

Cysteine 107 serves as the catalytic Cysteine persulfide intermediate.

It belongs to the FdhD family.

It is found in the cytoplasm. Functionally, required for formate dehydrogenase (FDH) activity. Acts as a sulfur carrier protein that transfers sulfur from IscS to the molybdenum cofactor prior to its insertion into FDH. This chain is Sulfur carrier protein FdhD, found in Geobacillus kaustophilus (strain HTA426).